We begin with the raw amino-acid sequence, 102 residues long: Small ribosomal subunit protein uS10 (102 aa).

This sequence belongs to the universal ribosomal protein uS10 family. Part of the 30S ribosomal subunit.

Its function is as follows. Involved in the binding of tRNA to the ribosomes. In Thermotoga neapolitana (strain ATCC 49049 / DSM 4359 / NBRC 107923 / NS-E), this protein is Small ribosomal subunit protein uS10.